The primary structure comprises 646 residues: Cell surface glycoprotein MUC18 (646 aa).

Residues 1–23 (MGLPRLVCAFLLAACCCCPRVAG) form the signal peptide. 2 Ig-like V-type domains span residues 24–129 (VPGE…YRIQ) and 139–242 (PNIQ…REVT). Residues 24–559 (VPGEAEQPAP…RKLPEPESRG (536 aa)) lie on the Extracellular side of the membrane. Disulfide bonds link Cys48-Cys116, Cys161-Cys223, Cys272-Cys320, and Cys365-Cys407. The N-linked (GlcNAc...) asparagine glycan is linked to Asn56. Ig-like C2-type domains follow at residues 244–330 (PVFY…TMIS), 335–424 (PQEL…QLVN), and 430–510 (PPWM…KNTS). The interval 278–299 (PPPHFSISKQNPSTREAEEETT) is disordered. 7 N-linked (GlcNAc...) asparagine glycosylation sites follow: Asn418, Asn449, Asn467, Asn508, Asn518, Asn527, and Asn544. A disulfide bridge connects residues Cys452 and Cys499. The interval 525–554 (DSNTTTGLSTSTASPHTRANSTSTERKLPE) is disordered. Polar residues predominate over residues 533–547 (STSTASPHTRANSTS). The chain crosses the membrane as a helical span at residues 560–583 (VVIVAVIVCILVLAVLGAVLYFLY). Residues 584–646 (KKGKLPCRRS…QGEKYIDLRH (63 aa)) lie on the Cytoplasmic side of the membrane. Phosphoserine is present on residues Ser606, Ser614, and Ser628. A disordered region spans residues 620-646 (EMGLLQGSSGDKRAPGDQGEKYIDLRH). Basic and acidic residues predominate over residues 629–646 (GDKRAPGDQGEKYIDLRH).

Detected in endothelial cells in vascular tissue throughout the body. May appear at the surface of neural crest cells during their embryonic migration. Appears to be limited to vascular smooth muscle in normal adult tissues. Associated with tumor progression and the development of metastasis in human malignant melanoma. Expressed most strongly on metastatic lesions and advanced primary tumors and is only rarely detected in benign melanocytic nevi and thin primary melanomas with a low probability of metastasis.

Its subcellular location is the membrane. Its function is as follows. Plays a role in cell adhesion, and in cohesion of the endothelial monolayer at intercellular junctions in vascular tissue. Its expression may allow melanoma cells to interact with cellular elements of the vascular system, thereby enhancing hematogeneous tumor spread. Could be an adhesion molecule active in neural crest cells during embryonic development. Acts as a surface receptor that triggers tyrosine phosphorylation of FYN and PTK2/FAK1, and a transient increase in the intracellular calcium concentration. The protein is Cell surface glycoprotein MUC18 (MCAM) of Homo sapiens (Human).